An 893-amino-acid chain; its full sequence is MSVDNWLLHPLWGQTFLLLLSVAVAQAHWPSEPSEAVRDWKNQLEASMHSVLSDFQEAVPTVVGIPDGTAVVGRSFRVSIPTDLIASSGEIIKVSAAGKEALPSWLHWDPHSHILEGLPLDTDKGVHYISVSAARLGANGSHVPQTSSVFSIEVYPEDHNEPQSVRAASSDPGEVVPSACAADEPVTVLTVILDADLTKMTPKQRIDLLNRMQSFSEVELHNMKLVPVVNNRLFDMSAFMAGPGNAKKVVENGALLSWKLGCSLNQNSVPDIRGVETPAREGAMSAQLGYPVVGWHIANKKPTLPKRLRRQIHATPTPVTAIGPPTTAIQEPPSRIVPTPTSPAIAPPTETMAPPVRDPVPGKPTVTIRTRGAIIQTPTLGPIQPTRVSEAGTTVPGQIRPTLTIPGYVEPTAVITPPTTTTKKPRVSTPKPATPSTDSSTTTTRRPTKKPRTPRPVPRVTTKAPITRLETASPPTRIRTTTSGVPRGGEPNQRPELKNHIDRVDAWVGTYFEVKIPSDTFYDNEDTTTDKLKLTLKLREQQLVGEKSWVQFNSNSQLMYGLPDSSHVGKHEYFMHATDKGGLSAVDAFEIHVHKRPQGDKAPARFKARLAGDPAPVVNDIHKKIALVKKLAFAFGDRNCSSITLQNITRGSIVVEWTNNTLPLEPCPKEQIIGLSRRIADENGKPRPAFSNALEPDFKALSIAVTGSGSCRHLQFIPVAPPSPGSSAAPATEVPDRDPEKSSEDDVYLHTVIPAVVVAAILLIAGIIAMICYRKKRKGKLTLEDQATFIKKGVPIIFADELDDSKPPPSSSMPLILQEEKAPLPPPEYPNQSMPETTPLNQDTVGEYTPLRDEDPNAPPYQPPPPFTAPMEGKGSRPKNMTPYRSPPPYVPP.

The signal sequence occupies residues 1–27; that stretch reads MSVDNWLLHPLWGQTFLLLLSVAVAQA. Residues 28-406 form a required for laminin recognition region; that stretch reads HWPSEPSEAV…GQIRPTLTIP (379 aa). The tract at residues 47–69 is O-glycosylated at one site; that stretch reads SMHSVLSDFQEAVPTVVGIPDGT. Residue asparagine 139 is glycosylated (N-linked (GlcNAc...) asparagine). An intrachain disulfide couples cysteine 180 to cysteine 262. Residues 314 to 483 are mucin-like domain; the sequence is ATPTPVTAIG…PPTRIRTTTS (170 aa). 3 O-linked (Man6P...) threonine glycosylation sites follow: threonine 315, threonine 317, and threonine 377. The tract at residues 379 to 498 is disordered; the sequence is TLGPIQPTRV…GEPNQRPELK (120 aa). Low complexity predominate over residues 409–445; sequence VEPTAVITPPTTTTKKPRVSTPKPATPSTDSSTTTTR. The segment at 461-483 is O-glycosylated at seven sites with GalNAc; sequence TTKAPITRLETASPPTRIRTTTS. In terms of domain architecture, Peptidase S72 spans 601–710; that stretch reads KAPARFKARL…LSIAVTGSGS (110 aa). Asparagine 639, asparagine 647, and asparagine 659 each carry an N-linked (GlcNAc...) asparagine glycan. Residues 652 to 751 are Extracellular-facing; it reads SIVVEWTNNT…SSEDDVYLHT (100 aa). A disulfide bond links cysteine 667 and cysteine 711. A disordered region spans residues 722–744; it reads PSPGSSAAPATEVPDRDPEKSSE. Residues 734–744 show a composition bias toward basic and acidic residues; the sequence is VPDRDPEKSSE. A helical transmembrane segment spans residues 752–772; sequence VIPAVVVAAILLIAGIIAMIC. Residues 773 to 893 are Cytoplasmic-facing; it reads YRKKRKGKLT…YRSPPPYVPP (121 aa). A Nuclear localization signal motif is present at residues 774 to 780; the sequence is RKKRKGK. The residue at position 788 (threonine 788) is a Phosphothreonine. A required for interaction with CAV3 region spans residues 817–893; the sequence is LQEEKAPLPP…YRSPPPYVPP (77 aa). The segment at 821–893 is disordered; that stretch reads KAPLPPPEYP…YRSPPPYVPP (73 aa). Residues 830-844 show a composition bias toward polar residues; that stretch reads PNQSMPETTPLNQDT. Residues 857–868 are compositionally biased toward pro residues; sequence NAPPYQPPPPFT. Residues 878 to 893 are required for binding DMD and UTRN; the sequence is PKNMTPYRSPPPYVPP. The PPXY motif signature appears at 887 to 890; sequence PPPY. Tyrosine 890 is modified (phosphotyrosine; by SRC).

Monomer. Heterodimer of alpha- and beta-dystroglycan subunits which are the central components of the dystrophin-glycoprotein complex. This complex then can form a dystrophin-associated glycoprotein complex (DGC) which is composed of three subcomplexes: a cytoplasmic complex comprised of DMD (or UTRN), DTNA and a number of syntrophins, such as SNTB1, SNTB2, SNTG1 and SNTG2, the transmembrane dystroglycan complex, and the sarcoglycan-sarcospan complex. Interacts (via the N-terminal of alphaDAG1) with LARGE1; the interaction enhances laminin binding. Interacts with SGCD. Interacts with AGR2 and AGR3. Interacts (betaDAG1) with DMD; the interaction is inhibited by phosphorylation on the PPXY motif. Interacts (betaDAG1, via its PPXY motif) with UTRN (via its WWW and ZZ domains); the interaction is inhibited by phosphorylation on the PPXY motif. Interacts (betaDAG1, via its phosphorylated PPXY motif) with the SH2 domain-containing proteins, FYN, CSK, NCK and SHC. Interacts (betaDAG1) with CAV3 (via a central WW-like domain); the interaction disrupts the binding of DMD. BetaDAG1 directly interacts with ANK3, but not with ANK2; this interaction does not interfere with DMD-binding and is required for retention at costameres. Identified in a dystroglycan complex that contains at least PRX, DRP2, UTRN, DMD and DAG1. Interacts with POMGNT1. BetaDAG1 interacts with CD93. O-glycosylated. POMGNT1 catalyzes the initial addition of N-acetylglucosamine, giving rise to the GlcNAc(beta1-2)Man(alpha1-)O-Ser/Thr moiety and thus providing the necessary basis for the addition of further carbohydrate moieties. Heavily O-glycosylated comprising of up to two thirds of its mass and the carbohydrate composition differs depending on tissue type. Mucin-type O-glycosylation is important for ligand binding activity. O-mannosylation is found in high abundance in both brain and muscle where the most abundant glycan is Sia-alpha-2-3-Gal-beta-1-4-Glc-NAc-beta-1-2-Man. In muscle, glycosylation on Thr-315, Thr-317, Thr-379 by a phosphorylated O-mannosyl glycan with the structure 2-(N-acetylamido)-2-deoxygalactosyl-beta-1,3-2-(N-acetylamido)-2-deoxyglucosyl-beta-1,4-6-phosphomannose is mediated by like-acetylglucosaminyltransferase (LARGE1) protein amd is required for laminin binding. O-glycosylated in the N-terminal region with a core 1 or possibly core 8 glycan. The brain form displays a unique glycosylation pattern which is absent in other tissues; this form shows enhanced binding to laminin LAMA5 compared to the skeletal muscle form. Post-translationally, N-glycosylated. In terms of processing, autolytic cleavage produces the alpha and beta subunits. In cutaneous cells, as well as in certain pathological conditions, shedding of beta-dystroglycan can occur releasing a peptide of about 30 kDa. SRC-mediated phosphorylation of the PPXY motif of the beta subunit recruits SH2 domain-containing proteins, but inhibits binding to WWW domain-containing proteins, DMD and UTRN. This phosphorylation also inhibits nuclear entry. As to expression, detected in brain and kidney (at protein level). Detected in sciatic nerve (at protein level). Expressed in neurons and muscle cells (at protein level). Expressed in a variety of tissues. In brain, expressed in the hippocampal formation, the olfactory bulb, the cerebellum and the thalamus. In the peripheral nerve system, expressed in Schwann cells.

Its subcellular location is the secreted. It localises to the extracellular space. The protein localises to the cell membrane. The protein resides in the cytoplasm. It is found in the cytoskeleton. Its subcellular location is the nucleus. It localises to the nucleoplasm. The protein localises to the sarcolemma. The protein resides in the postsynaptic cell membrane. Functionally, the dystroglycan complex is involved in a number of processes including laminin and basement membrane assembly, sarcolemmal stability, cell survival, peripheral nerve myelination, nodal structure, cell migration, and epithelial polarization. In terms of biological role, extracellular peripheral glycoprotein that acts as a receptor for extracellular matrix proteins containing laminin-G domains, and for certain adenoviruses. Receptor for laminin-2 (LAMA2) and agrin in peripheral nerve Schwann cells. Also acts as a receptor for laminin LAMA5. Its function is as follows. Transmembrane protein that plays important roles in connecting the extracellular matrix to the cytoskeleton. Acts as a cell adhesion receptor in both muscle and non-muscle tissues. Receptor for both DMD and UTRN and, through these interactions, scaffolds axin to the cytoskeleton. Also functions in cell adhesion-mediated signaling and implicated in cell polarity. This Mus musculus (Mouse) protein is Dystroglycan 1.